A 367-amino-acid polypeptide reads, in one-letter code: Glutamate 5-kinase (367 aa).

An ATP-binding site is contributed by K10. Substrate is bound by residues S50, D137, and N149. Residues 169 to 170 (TD) and 211 to 217 (TGGMSTK) contribute to the ATP site. The region spanning 275–353 (AGEITVDEGA…QEIDAILGYE (79 aa)) is the PUA domain.

This sequence belongs to the glutamate 5-kinase family.

The protein localises to the cytoplasm. It catalyses the reaction L-glutamate + ATP = L-glutamyl 5-phosphate + ADP. Its pathway is amino-acid biosynthesis; L-proline biosynthesis; L-glutamate 5-semialdehyde from L-glutamate: step 1/2. In terms of biological role, catalyzes the transfer of a phosphate group to glutamate to form L-glutamate 5-phosphate. This chain is Glutamate 5-kinase, found in Escherichia fergusonii (strain ATCC 35469 / DSM 13698 / CCUG 18766 / IAM 14443 / JCM 21226 / LMG 7866 / NBRC 102419 / NCTC 12128 / CDC 0568-73).